Reading from the N-terminus, the 225-residue chain is 3-dehydroquinate dehydratase (225 aa).

3-dehydroquinate is bound by residues serine 6, glutamate 30 to arginine 32, and arginine 62. Catalysis depends on histidine 118, which acts as the Proton donor/acceptor. Lysine 143 serves as the catalytic Schiff-base intermediate with substrate. 3-dehydroquinate is bound by residues arginine 186, threonine 205, and glutamine 209.

Belongs to the type-I 3-dehydroquinase family. In terms of assembly, homodimer.

The enzyme catalyses 3-dehydroquinate = 3-dehydroshikimate + H2O. Its pathway is metabolic intermediate biosynthesis; chorismate biosynthesis; chorismate from D-erythrose 4-phosphate and phosphoenolpyruvate: step 3/7. In terms of biological role, involved in the third step of the chorismate pathway, which leads to the biosynthesis of aromatic amino acids. Catalyzes the cis-dehydration of 3-dehydroquinate (DHQ) and introduces the first double bond of the aromatic ring to yield 3-dehydroshikimate. The chain is 3-dehydroquinate dehydratase from Streptococcus gordonii (strain Challis / ATCC 35105 / BCRC 15272 / CH1 / DL1 / V288).